We begin with the raw amino-acid sequence, 617 residues long: V-type proton ATPase catalytic subunit A (617 aa).

The residue at position 136 (threonine 136) is a Phosphothreonine. 250 to 257 lines the ATP pocket; it reads GAFGCGKT. Phosphoserine; by AMPK is present on serine 384.

Belongs to the ATPase alpha/beta chains family. V-ATPase is a heteromultimeric enzyme made up of two complexes: the ATP-hydrolytic V1 complex and the proton translocation V0 complex. The V1 complex consists of three catalytic AB heterodimers that form a heterohexamer, three peripheral stalks each consisting of EG heterodimers, one central rotor including subunits D and F, and the regulatory subunits C and H. The proton translocation complex V0 consists of the proton transport subunit a, a ring of proteolipid subunits c9c'', rotary subunit d, subunits e and f, and the accessory subunits ATP6AP1/Ac45 and ATP6AP2/PRR. Interacts with the V0 complex V-ATPase subunit a4 ATP6V0A4. Interacts with WFS1. Interacts with alpha-crystallin B chain/CRYAB and with MTOR, forming a ternary complex. Phosphorylation at Ser-384 by AMPK down-regulates its enzyme activity.

It localises to the cytoplasm. It is found in the cytosol. The protein resides in the cytoplasmic vesicle. Its subcellular location is the secretory vesicle. The protein localises to the clathrin-coated vesicle membrane. It localises to the lysosome. It catalyses the reaction ATP + H2O + 4 H(+)(in) = ADP + phosphate + 5 H(+)(out). With respect to regulation, ATP hydrolysis occurs at the interface between the nucleotide-binding domains of subunits A and B. ATP hydrolysis triggers a conformational change in the subunits D and F, which induces a shift of subunit d. The c-ring is subsequently rotated and results in a continuous proton translocation across the membrane. Functionally, catalytic subunit of the V1 complex of vacuolar(H+)-ATPase (V-ATPase), a multisubunit enzyme composed of a peripheral complex (V1) that hydrolyzes ATP and a membrane integral complex (V0) that translocates protons. V-ATPase is responsible for acidifying and maintaining the pH of intracellular compartments and in some cell types, is targeted to the plasma membrane, where it is responsible for acidifying the extracellular environment. In aerobic conditions, involved in intracellular iron homeostasis, thus triggering the activity of Fe(2+) prolyl hydroxylase (PHD) enzymes, and leading to HIF1A hydroxylation and subsequent proteasomal degradation. May play a role in neurite development and synaptic connectivity. The protein is V-type proton ATPase catalytic subunit A (ATP6V1A) of Sus scrofa (Pig).